A 436-amino-acid chain; its full sequence is MRSFLKPLLTIAAMALGMTAVIPMPAWALVELNVNKGNVEPLPIAITDFQGGDALGAQISQIVTADLKRSGLFAPIDKSAFIEKISNPDAAPRFDDWKVINAQALVTGSVSKEADGRIRAQYRLWDTFAGQQMSGEQFFANDANQRRVAHIIADAIYERLTGEKGYFDTRVVFIDESGAKNARKKRLAIMDQDGANVRYLSDGRSIVLTPRFSPNRQEITYMSYESGQPRVYLLQIETGQRELVGNFPGMTFAPRFSPDGQKVIMSLLRDDGNSNIFAMDLRSRSTTRLTNSTAIDTSPSYSPDGSKVVFTSDRGGRAQIYVMGADGSGQTRISFGDGVYSTPVWSPRGDLIAFTKQTGGEFQIGVMKTDGSGERILSSGFQQEGPTWAPNGRVLMFFRDSNGGPKLVSVDLTGRNEQPIPTANFASDPAWSPLLE.

Positions Met1 to Ala28 are cleaved as a signal peptide.

The protein belongs to the TolB family. As to quaternary structure, the Tol-Pal system is composed of five core proteins: the inner membrane proteins TolA, TolQ and TolR, the periplasmic protein TolB and the outer membrane protein Pal. They form a network linking the inner and outer membranes and the peptidoglycan layer.

The protein localises to the periplasm. Part of the Tol-Pal system, which plays a role in outer membrane invagination during cell division and is important for maintaining outer membrane integrity. This Mesorhizobium japonicum (strain LMG 29417 / CECT 9101 / MAFF 303099) (Mesorhizobium loti (strain MAFF 303099)) protein is Tol-Pal system protein TolB.